A 368-amino-acid polypeptide reads, in one-letter code: MSKRDYYQVLGVPRTASEDDLKKAYRRCAMKYHPDRNPGDAAAEAAFKECKEAYEVLADTKKRKLYDTHGHAAFEHGVGGGNAPDMNDIFGDIFGNIFGGARASRRGADVGYMVELDLEEAVAGVERQIQIPTLVECTHCNGSGSEDGHVETCGTCRGSGQVRIQRGIFAMQQTCPHCGGRGVIIRNPCKVCNGAGRVEDHKTLSVKIPAGVDNGDRIRLSGEGEQGPDGVPPGDLYVEVRVREHPIFQRDGDDLHCEVPVRISQAALGDIVRVATLDGEAEIRIPAETQSGKLFRLRGKGVRSVRSRTEGDLYCRIVVETPVNLTAEQRKLLEQFEMTFAGEDARKHSPKSATFLDGVKSFWDRMTS.

The 66-residue stretch at 5–70 (DYYQVLGVPR…KKRKLYDTHG (66 aa)) folds into the J domain. The segment at 124–201 (GVERQIQIPT…CNGAGRVEDH (78 aa)) adopts a CR-type zinc-finger fold. Zn(2+)-binding residues include C137, C140, C153, C156, C175, C178, C189, and C192. CXXCXGXG motif repeat units follow at residues 137-144 (CTHCNGSG), 153-160 (CGTCRGSG), 175-182 (CPHCGGRG), and 189-196 (CKVCNGAG).

This sequence belongs to the DnaJ family. In terms of assembly, homodimer. Zn(2+) serves as cofactor.

The protein resides in the cytoplasm. Participates actively in the response to hyperosmotic and heat shock by preventing the aggregation of stress-denatured proteins and by disaggregating proteins, also in an autonomous, DnaK-independent fashion. Unfolded proteins bind initially to DnaJ; upon interaction with the DnaJ-bound protein, DnaK hydrolyzes its bound ATP, resulting in the formation of a stable complex. GrpE releases ADP from DnaK; ATP binding to DnaK triggers the release of the substrate protein, thus completing the reaction cycle. Several rounds of ATP-dependent interactions between DnaJ, DnaK and GrpE are required for fully efficient folding. Also involved, together with DnaK and GrpE, in the DNA replication of plasmids through activation of initiation proteins. The sequence is that of Chaperone protein DnaJ from Xylella fastidiosa (strain M12).